Consider the following 124-residue polypeptide: Large ribosomal subunit protein bL21 (124 aa).

It belongs to the bacterial ribosomal protein bL21 family. In terms of assembly, part of the 50S ribosomal subunit. Contacts protein L20.

Functionally, this protein binds to 23S rRNA in the presence of protein L20. The chain is Large ribosomal subunit protein bL21 from Sinorhizobium medicae (strain WSM419) (Ensifer medicae).